Reading from the N-terminus, the 212-residue chain is ATP-dependent dethiobiotin synthetase BioD (212 aa).

An ATP-binding site is contributed by 13–18 (GIGKTV). Thr-17 is a Mg(2+) binding site. Lys-33 is a catalytic residue. A substrate-binding site is contributed by Ser-37. Position 100 (Glu-100) interacts with Mg(2+). ATP contacts are provided by residues 100–103 (EGAG) and 184–186 (PRL).

It belongs to the dethiobiotin synthetase family. In terms of assembly, homodimer. The cofactor is Mg(2+).

The protein localises to the cytoplasm. It catalyses the reaction (7R,8S)-7,8-diammoniononanoate + CO2 + ATP = (4R,5S)-dethiobiotin + ADP + phosphate + 3 H(+). It functions in the pathway cofactor biosynthesis; biotin biosynthesis; biotin from 7,8-diaminononanoate: step 1/2. Catalyzes a mechanistically unusual reaction, the ATP-dependent insertion of CO2 between the N7 and N8 nitrogen atoms of 7,8-diaminopelargonic acid (DAPA, also called 7,8-diammoniononanoate) to form a ureido ring. This chain is ATP-dependent dethiobiotin synthetase BioD, found in Brucella anthropi (strain ATCC 49188 / DSM 6882 / CCUG 24695 / JCM 21032 / LMG 3331 / NBRC 15819 / NCTC 12168 / Alc 37) (Ochrobactrum anthropi).